A 710-amino-acid chain; its full sequence is Polyribonucleotide nucleotidyltransferase (710 aa).

Positions 487 and 493 each coordinate Mg(2+). The KH domain maps to 554 to 613 (PKIITMTINPDKIRDVIGPSGKQINKIIEETGVKIDIEQDGTVFISSIDQQMNEKAKKII). An S1 motif domain is found at 623-691 (GEIYLGKVKR…KQGRVNLSRK (69 aa)).

It belongs to the polyribonucleotide nucleotidyltransferase family. Mg(2+) is required as a cofactor.

It localises to the cytoplasm. The catalysed reaction is RNA(n+1) + phosphate = RNA(n) + a ribonucleoside 5'-diphosphate. In terms of biological role, involved in mRNA degradation. Catalyzes the phosphorolysis of single-stranded polyribonucleotides processively in the 3'- to 5'-direction. This Bacillus cytotoxicus (strain DSM 22905 / CIP 110041 / 391-98 / NVH 391-98) protein is Polyribonucleotide nucleotidyltransferase.